The primary structure comprises 415 residues: Putative competence-damage inducible protein (415 aa).

The protein belongs to the CinA family.

The protein is Putative competence-damage inducible protein of Listeria innocua serovar 6a (strain ATCC BAA-680 / CLIP 11262).